Here is a 427-residue protein sequence, read N- to C-terminus: Glutamyl-tRNA reductase (427 aa).

Substrate-binding positions include 49–52, serine 101, 106–108, and glutamine 112; these read TCNR and EPQ. Cysteine 50 serves as the catalytic Nucleophile. 181 to 186 serves as a coordination point for NADP(+); that stretch reads GAGETI. Residues 407 to 427 are disordered; that stretch reads FPATPGYRHPPVRPDDADPAP. A compositionally biased stretch (basic and acidic residues) spans 418–427; the sequence is VRPDDADPAP.

Belongs to the glutamyl-tRNA reductase family. As to quaternary structure, homodimer.

It carries out the reaction (S)-4-amino-5-oxopentanoate + tRNA(Glu) + NADP(+) = L-glutamyl-tRNA(Glu) + NADPH + H(+). It participates in porphyrin-containing compound metabolism; protoporphyrin-IX biosynthesis; 5-aminolevulinate from L-glutamyl-tRNA(Glu): step 1/2. In terms of biological role, catalyzes the NADPH-dependent reduction of glutamyl-tRNA(Glu) to glutamate 1-semialdehyde (GSA). The protein is Glutamyl-tRNA reductase of Stenotrophomonas maltophilia (strain R551-3).